Reading from the N-terminus, the 89-residue chain is Small ribosomal subunit protein uS15 (89 aa).

The protein belongs to the universal ribosomal protein uS15 family. Part of the 30S ribosomal subunit. Forms a bridge to the 50S subunit in the 70S ribosome, contacting the 23S rRNA.

In terms of biological role, one of the primary rRNA binding proteins, it binds directly to 16S rRNA where it helps nucleate assembly of the platform of the 30S subunit by binding and bridging several RNA helices of the 16S rRNA. Forms an intersubunit bridge (bridge B4) with the 23S rRNA of the 50S subunit in the ribosome. The polypeptide is Small ribosomal subunit protein uS15 (Pseudomonas putida (Arthrobacter siderocapsulatus)).